The chain runs to 173 residues: Shikimate kinase (173 aa).

ATP is bound at residue 14–19; it reads GAGKST. Ser-18 lines the Mg(2+) pocket. Residues Asp-36, Arg-60, and Gly-82 each contribute to the substrate site. Arg-120 is a binding site for ATP. Substrate is bound at residue Arg-140. Residue Gln-157 participates in ATP binding.

The protein belongs to the shikimate kinase family. Monomer. The cofactor is Mg(2+).

It localises to the cytoplasm. It carries out the reaction shikimate + ATP = 3-phosphoshikimate + ADP + H(+). Its pathway is metabolic intermediate biosynthesis; chorismate biosynthesis; chorismate from D-erythrose 4-phosphate and phosphoenolpyruvate: step 5/7. Catalyzes the specific phosphorylation of the 3-hydroxyl group of shikimic acid using ATP as a cosubstrate. The chain is Shikimate kinase from Buchnera aphidicola subsp. Acyrthosiphon pisum (strain APS) (Acyrthosiphon pisum symbiotic bacterium).